The chain runs to 631 residues: uncharacterized protein (631 aa).

Transmembrane regions (helical) follow at residues 42 to 62 (VLVG…IGGF), 76 to 96 (ALKL…GTLL), 106 to 128 (VLGL…GPAP), 152 to 172 (AGLT…GWLW), 344 to 364 (ALKY…FGFA), 366 to 386 (SYWI…VFTL), 398 to 418 (IGVI…YIAF), 429 to 449 (MLIV…ALVI), and 464 to 484 (IARL…TMLL).

Belongs to the YccS/YhfK family.

The protein resides in the cell membrane. This is an uncharacterized protein from Bacillus subtilis (strain 168).